The sequence spans 739 residues: Phosphoribosylformylglycinamidine synthase subunit PurL (739 aa).

The active site involves His54. The ATP site is built by Tyr57 and Lys96. Mg(2+) is bound at residue Glu98. Residues Ser99–His102 and Arg121 contribute to the substrate site. The active-site Proton acceptor is the His100. Asp122 provides a ligand contact to Mg(2+). Residue Gln245 participates in substrate binding. Position 273 (Asp273) interacts with Mg(2+). Glu317–Gln319 lines the substrate pocket. Asp500 and Gly537 together coordinate ATP. Asn538 contributes to the Mg(2+) binding site. Ser540 lines the substrate pocket.

It belongs to the FGAMS family. As to quaternary structure, monomer. Part of the FGAM synthase complex composed of 1 PurL, 1 PurQ and 2 PurS subunits.

The protein resides in the cytoplasm. The catalysed reaction is N(2)-formyl-N(1)-(5-phospho-beta-D-ribosyl)glycinamide + L-glutamine + ATP + H2O = 2-formamido-N(1)-(5-O-phospho-beta-D-ribosyl)acetamidine + L-glutamate + ADP + phosphate + H(+). Its pathway is purine metabolism; IMP biosynthesis via de novo pathway; 5-amino-1-(5-phospho-D-ribosyl)imidazole from N(2)-formyl-N(1)-(5-phospho-D-ribosyl)glycinamide: step 1/2. In terms of biological role, part of the phosphoribosylformylglycinamidine synthase complex involved in the purines biosynthetic pathway. Catalyzes the ATP-dependent conversion of formylglycinamide ribonucleotide (FGAR) and glutamine to yield formylglycinamidine ribonucleotide (FGAM) and glutamate. The FGAM synthase complex is composed of three subunits. PurQ produces an ammonia molecule by converting glutamine to glutamate. PurL transfers the ammonia molecule to FGAR to form FGAM in an ATP-dependent manner. PurS interacts with PurQ and PurL and is thought to assist in the transfer of the ammonia molecule from PurQ to PurL. In Bacillus cereus (strain ZK / E33L), this protein is Phosphoribosylformylglycinamidine synthase subunit PurL.